Here is a 1248-residue protein sequence, read N- to C-terminus: Ankyrin repeat and sterile alpha motif domain-containing protein 1B (1248 aa).

ANK repeat units follow at residues 2 to 31 (GKDQELLEAARTGNVALVEKLLSGRKGGIL), 58 to 87 (SGYTALHHAALNGHKDIVLKLLQYEASTNV), 91 to 120 (KGYFPIHLAAWKGDVEIVKILIHHGPSHSR), 127 to 156 (ENETALHCAAQYGHSEVVAVLLEELTDPTI), 160 to 189 (KLETPLDLAALYGRLRVVKMIISAHPNLMS), 193 to 222 (RKHTPLHLAARNGHKAVVQVLLEAGMDVSC), and 225 to 254 (EKGSALHEAALFGKVDVVRVLLETGIDANI). Residues 296–322 (EPVQEDATQETHISSPVESPSQKTKSE) are disordered. Residues 305–322 (ETHISSPVESPSQKTKSE) show a composition bias toward polar residues. Phosphoserine is present on residues S309, S310, S314, S353, and S364. Disordered stretches follow at residues 367 to 400 (ELGKNGSQSVRTSSTINLSPGEVEEEDDDENTCG), 474 to 514 (APSP…PDTA), and 558 to 623 (SFTA…ENPF). Residues 371-384 (NGSQSVRTSSTINL) show a composition bias toward polar residues. Residues 388-397 (EVEEEDDDEN) are compositionally biased toward acidic residues. T503 bears the Phosphothreonine mark. S507 and S510 each carry phosphoserine. Residues 558 to 575 (SFTASPPASPPTSSVGTT) are compositionally biased toward low complexity. The span at 577–601 (VKNEGTNHTDDLSRQDDNDPPKEYD) shows a compositional bias: basic and acidic residues. S738 is subject to Phosphoserine. The interval 749–777 (EKTSRVNWSESSTAEHSSKGNSERTPSFT) is disordered. Over residues 753–763 (RVNWSESSTAE) the composition is skewed to polar residues. T773 is subject to Phosphothreonine. At S775 the chain carries Phosphoserine. SAM domains lie at 810–876 (CPVQ…LPKM) and 884–949 (YHPT…RLHD). Residue Y901 is modified to Phosphotyrosine. A Nuclear localization signal motif is present at residues 935–938 (HRKR). The tract at residues 944–989 (GDRLHDDPPQKPPRSITLREPSGNHTPPQLSPSLSQSTYTTGGSLD) is disordered. Residues 969-984 (TPPQLSPSLSQSTYTT) show a composition bias toward low complexity. At S974 the chain carries Phosphoserine. Y1007 carries the phosphotyrosine modification. A PID domain is found at 1056 to 1213 (IFQSCDYKAF…SFENKPSKPI (158 aa)). The disordered stretch occupies residues 1197–1248 (HSSTLPESFENKPSKPIPKPRVSIRKSVDLLHASHTGQEPSERHTEEALRKF). Basic and acidic residues predominate over residues 1236–1248 (PSERHTEEALRKF).

In terms of assembly, isoform 3 interacts with DLG4. Interacts with EPHA8. Isoform 2 interacts with COIL. Isoform 4 interacts with APP and EPHA8. Isoform 6 interacts with EPHA8. Isoform 3 nuclear translocation requires an NMDAR-dependent proteolytic cleavage. In terms of tissue distribution, highly expressed in marrow from patients with pre-B ALL associated with the t(1;19) translocation. Strongly expressed in brain and testis. Expressed in fetal brain. Isoform 4 is highly expressed in brain (at protein level). Isoform 6 is expressed in brain and several cancer cell lines.

The protein localises to the cytoplasm. It localises to the nucleus. Its subcellular location is the postsynaptic density. The protein resides in the cell projection. It is found in the dendritic spine. The protein localises to the cajal body. Its function is as follows. Isoform 2 may participate in the regulation of nucleoplasmic coilin protein interactions in neuronal and transformed cells. Isoform 3 can regulate global protein synthesis by altering nucleolar numbers. In terms of biological role, isoform 4 may play a role as a modulator of APP processing. Overexpression can down-regulate APP processing. The chain is Ankyrin repeat and sterile alpha motif domain-containing protein 1B (ANKS1B) from Homo sapiens (Human).